The following is a 2193-amino-acid chain: Genome polyprotein (2193 aa).

The N-myristoyl glycine; by host moiety is linked to residue G2. The Cytoplasmic portion of the chain corresponds to 2-1503; it reads GAQVSTQKTG…HVSRAFICLQ (1502 aa). An amphipathic alpha-helix region spans residues 565 to 582; it reads QLLQGDVEEAVNRAVARV. Active-site for protease 2A activity residues include H880 and D898. Zn(2+)-binding residues include C915 and C917. The For protease 2A activity role is filled by C969. Zn(2+)-binding residues include C975 and H977. The interval 1109 to 1181 is membrane-binding; that stretch reads SNGWLKKFTE…EQSAPSQSDQ (73 aa). The oligomerization stretch occupies residues 1109 to 1247; the sequence is SNGWLKKFTE…SPGAGKSVAT (139 aa). The RNA-binding stretch occupies residues 1130-1134; it reads AIKIQ. Residues 1213–1369 form the SF3 helicase domain; it reads EKKMSNYIQF…SMYSQNGKIN (157 aa). Zn(2+) is bound by residues C1377, C1389, and C1394. A C4-type; degenerate zinc finger spans residues 1377–1394; it reads CDEECCPVNFKRCCPLVC. An RNA-binding region spans residues 1421–1428; sequence EYNHRHSV. The interval 1432 to 1437 is oligomerization; that stretch reads LEALFQ. Residues 1504-1519 lie within the membrane without spanning it; that stretch reads ALTTFVSVAGIIYIIY. Over 1520–2193 the chain is Cytoplasmic; it reads KLFAGFQGAY…TLRRKWLDSF (674 aa). Y1529 carries the O-(5'-phospho-RNA)-tyrosine modification. The Peptidase C3 domain maps to 1549–1727; the sequence is GPAFEFAVAM…FSAALLRHYF (179 aa). Residues H1588, E1619, and C1695 each act as for protease 3C activity in the active site. Residues 1958–2074 enclose the RdRp catalytic domain; sequence GHLIAFDYSG…SYPWPIDASL (117 aa). 2 residues coordinate Mg(2+): D1964 and D2060.

Belongs to the picornaviruses polyprotein family. Interacts with capsid protein VP1 and capsid protein VP3 to form heterotrimeric protomers. As to quaternary structure, interacts with capsid protein VP0, and capsid protein VP3 to form heterotrimeric protomers. Five protomers subsequently associate to form pentamers which serve as building blocks for the capsid. Interacts with capsid protein VP2, capsid protein VP3 and capsid protein VP4 following cleavage of capsid protein VP0. In terms of assembly, interacts with capsid protein VP1 and capsid protein VP3 in the mature capsid. Interacts with host CD55; this interaction promotes virus attachment to the host cell and subsequent internalization. Interacts with capsid protein VP0 and capsid protein VP1 to form heterotrimeric protomers. Five protomers subsequently associate to form pentamers which serve as building blocks for the capsid. Interacts with capsid protein VP4 in the mature capsid. Interacts with protein 2C; this interaction may be important for virion morphogenesis. Interacts with host CD55; this interaction promotes virus attachment to the host cell and subsequent internalization. As to quaternary structure, interacts with capsid protein VP1 and capsid protein VP3. In terms of assembly, homodimer. Homohexamer; forms a hexameric ring structure with 6-fold symmetry characteristic of AAA+ ATPases. Interacts (via N-terminus) with host RTN3 (via reticulon domain); this interaction is important for viral replication. Interacts with capsid protein VP3; this interaction may be important for virion morphogenesis. As to quaternary structure, interacts with protein 3CD. In terms of assembly, homodimer. Interacts with host GBF1. Interacts (via GOLD domain) with host ACBD3 (via GOLD domain); this interaction allows the formation of a viral protein 3A/ACBD3 heterotetramer with a 2:2 stoichiometry, which will stimulate the recruitment of host PI4KB in order to synthesize PI4P at the viral RNA replication sites. Interacts with RNA-directed RNA polymerase. As to quaternary structure, interacts with protein 3AB and with RNA-directed RNA polymerase. In terms of assembly, interacts with Viral protein genome-linked and with protein 3CD. Mg(2+) is required as a cofactor. In terms of processing, specific enzymatic cleavages in vivo by the viral proteases yield processing intermediates and the mature proteins. Myristoylation is required for the formation of pentamers during virus assembly. Further assembly of 12 pentamers and a molecule of genomic RNA generates the provirion. Post-translationally, during virion maturation, immature virions are rendered infectious following cleavage of VP0 into VP4 and VP2. This maturation seems to be an autocatalytic event triggered by the presence of RNA in the capsid and it is followed by a conformational change infectious virion. In terms of processing, myristoylation is required during RNA encapsidation and formation of the mature virus particle. VPg is uridylylated by the polymerase into VPg-pUpU. This acts as a nucleotide-peptide primer for the genomic RNA replication.

It localises to the virion. The protein localises to the host cytoplasm. Its subcellular location is the host cytoplasmic vesicle membrane. It is found in the host nucleus. It carries out the reaction a ribonucleoside 5'-triphosphate + H2O = a ribonucleoside 5'-diphosphate + phosphate + H(+). The catalysed reaction is Selective cleavage of Tyr-|-Gly bond in the picornavirus polyprotein.. It catalyses the reaction RNA(n) + a ribonucleoside 5'-triphosphate = RNA(n+1) + diphosphate. The enzyme catalyses Selective cleavage of Gln-|-Gly bond in the poliovirus polyprotein. In other picornavirus reactions Glu may be substituted for Gln, and Ser or Thr for Gly.. With respect to regulation, replication or transcription is subject to high level of random mutations by the nucleotide analog ribavirin. Its function is as follows. Forms an icosahedral capsid of pseudo T=3 symmetry with capsid proteins VP2 and VP3. The capsid is 300 Angstroms in diameter, composed of 60 copies of each capsid protein and enclosing the viral positive strand RNA genome. Capsid protein VP1 mainly forms the vertices of the capsid. Capsid protein VP1 interacts with host cell receptor to provide virion attachment to target host cells. This attachment induces virion internalization. Tyrosine kinases are probably involved in the entry process. After binding to its receptor, the capsid undergoes conformational changes. Capsid protein VP1 N-terminus (that contains an amphipathic alpha-helix) and capsid protein VP4 are externalized. Together, they shape a pore in the host membrane through which viral genome is translocated to host cell cytoplasm. Functionally, forms an icosahedral capsid of pseudo T=3 symmetry with capsid proteins VP2 and VP3. The capsid is 300 Angstroms in diameter, composed of 60 copies of each capsid protein and enclosing the viral positive strand RNA genome. Lies on the inner surface of the capsid shell. After binding to the host receptor, the capsid undergoes conformational changes. Capsid protein VP4 is released, Capsid protein VP1 N-terminus is externalized, and together, they shape a pore in the host membrane through which the viral genome is translocated into the host cell cytoplasm. In terms of biological role, component of immature procapsids, which is cleaved into capsid proteins VP4 and VP2 after maturation. Allows the capsid to remain inactive before the maturation step. Its function is as follows. Cysteine protease that cleaves viral polyprotein and specific host proteins. It is responsible for the autocatalytic cleavage between the P1 and P2 regions, which is the first cleavage occurring in the polyprotein. Also cleaves the host translation initiation factor EIF4G1, in order to shut down the capped cellular mRNA translation. Inhibits the host nucleus-cytoplasm protein and RNA trafficking by cleaving host members of the nuclear pores. Counteracts stress granule formation probably by antagonizing its assembly or promoting its dissassembly. Functionally, plays an essential role in the virus replication cycle by acting as a viroporin. Creates a pore in the host endoplasmic reticulum and as a consequence releases Ca2+ in the cytoplasm of infected cell. In turn, high levels of cytoplasmic calcium may trigger membrane trafficking and transport of viral ER-associated proteins to viroplasms, sites of viral genome replication. Induces and associates with structural rearrangements of intracellular membranes. Displays RNA-binding, nucleotide binding and NTPase activities. May play a role in virion morphogenesis and viral RNA encapsidation by interacting with the capsid protein VP3. In terms of biological role, localizes the viral replication complex to the surface of membranous vesicles. Together with protein 3CD binds the Cis-Active RNA Element (CRE) which is involved in RNA synthesis initiation. Acts as a cofactor to stimulate the activity of 3D polymerase, maybe through a nucleid acid chaperone activity. Its function is as follows. Localizes the viral replication complex to the surface of membranous vesicles. It inhibits host cell endoplasmic reticulum-to-Golgi apparatus transport and causes the disassembly of the Golgi complex, possibly through GBF1 interaction. This would result in depletion of MHC, trail receptors and IFN receptors at the host cell surface. Plays an essential role in viral RNA replication by recruiting ACBD3 and PI4KB at the viral replication sites, thereby allowing the formation of the rearranged membranous structures where viral replication takes place. Functionally, acts as a primer for viral RNA replication and remains covalently bound to viral genomic RNA. VPg is uridylylated prior to priming replication into VPg-pUpU. The oriI viral genomic sequence may act as a template for this. The VPg-pUpU is then used as primer on the genomic RNA poly(A) by the RNA-dependent RNA polymerase to replicate the viral genome. During genome replication, the VPg-RNA linkage is removed by the host TDP2, thereby accelerating replication. During the late stage of the replication cycle, host TDP2 is excluded from sites of viral RNA synthesis and encapsidation, allowing for the generation of progeny virions. Involved in the viral replication complex and viral polypeptide maturation. It exhibits protease activity with a specificity and catalytic efficiency that is different from protease 3C. Protein 3CD lacks polymerase activity. Protein 3CD binds to the 5'UTR of the viral genome. In terms of biological role, replicates the viral genomic RNA on the surface of intracellular membranes. May form linear arrays of subunits that propagate along a strong head-to-tail interaction called interface-I. Covalently attaches UMP to a tyrosine of VPg, which is used to prime RNA synthesis. The positive stranded RNA genome is first replicated at virus induced membranous vesicles, creating a dsRNA genomic replication form. This dsRNA is then used as template to synthesize positive stranded RNA genomes. ss(+)RNA genomes are either translated, replicated or encapsidated. Its function is as follows. Major viral protease that mediates proteolytic processing of the polyprotein. Cleaves host EIF5B, contributing to host translation shutoff. Also cleaves host PABPC1, contributing to host translation shutoff. Cleaves host NLRP1, triggers host N-glycine-mediated degradation of the autoinhibitory NLRP1 N-terminal fragment. The polypeptide is Genome polyprotein (Echovirus 12 (strain Travis)).